Here is a 106-residue protein sequence, read N- to C-terminus: Small ribosomal subunit protein uS10 (106 aa).

Belongs to the universal ribosomal protein uS10 family. In terms of assembly, part of the 30S ribosomal subunit.

Its function is as follows. Involved in the binding of tRNA to the ribosomes. The sequence is that of Small ribosomal subunit protein uS10 from Mycoplasma genitalium (strain ATCC 33530 / DSM 19775 / NCTC 10195 / G37) (Mycoplasmoides genitalium).